The chain runs to 387 residues: 3-ketoacyl-CoA thiolase (387 aa).

The Acyl-thioester intermediate role is filled by Cys-91. Active-site proton acceptor residues include His-343 and Cys-373.

The protein belongs to the thiolase-like superfamily. Thiolase family. As to quaternary structure, heterotetramer of two alpha chains (FadB) and two beta chains (FadA).

It localises to the cytoplasm. The catalysed reaction is an acyl-CoA + acetyl-CoA = a 3-oxoacyl-CoA + CoA. Its pathway is lipid metabolism; fatty acid beta-oxidation. Its function is as follows. Catalyzes the final step of fatty acid oxidation in which acetyl-CoA is released and the CoA ester of a fatty acid two carbons shorter is formed. This is 3-ketoacyl-CoA thiolase from Escherichia fergusonii (strain ATCC 35469 / DSM 13698 / CCUG 18766 / IAM 14443 / JCM 21226 / LMG 7866 / NBRC 102419 / NCTC 12128 / CDC 0568-73).